The primary structure comprises 336 residues: N-lysine methyltransferase KMT5A (336 aa).

Residues 1–112 form a disordered region; sequence MGRGKKMSKP…KPSEQRETEC (112 aa). A compositionally biased stretch (basic and acidic residues) spans 67-93; the sequence is SVAHHESKCPGKPLTETRKKAEVEKKR. Positions 200–321 constitute an SET domain; it reads EGMKMDMITG…VGEELLYDYG (122 aa). S-adenosyl-L-methionine contacts are provided by residues 210–212, Tyr255, and 282–283; these read KGR and NH.

The protein belongs to the class V-like SAM-binding methyltransferase superfamily. Histone-lysine methyltransferase family. PR/SET subfamily.

It is found in the nucleus. Its subcellular location is the chromosome. It catalyses the reaction L-lysyl(20)-[histone H4] + S-adenosyl-L-methionine = N(6)-methyl-L-lysyl(20)-[histone H4] + S-adenosyl-L-homocysteine + H(+). The catalysed reaction is L-lysyl-[protein] + S-adenosyl-L-methionine = N(6)-methyl-L-lysyl-[protein] + S-adenosyl-L-homocysteine + H(+). Its function is as follows. Protein-lysine N-methyltransferase that monomethylates both histones and non-histone proteins. Specifically monomethylates 'Lys-20' of histone H4 (H4K20me1). H4K20me1 is enriched during mitosis and represents a specific tag for epigenetic transcriptional repression. Mainly functions in euchromatin regions, thereby playing a central role in the silencing of euchromatic genes. Required for cell proliferation, probably by contributing to the maintenance of proper higher-order structure of DNA during mitosis. Involved in chromosome condensation and proper cytokinesis. Nucleosomes are preferred as substrate compared to free histones. Mediates monomethylation of p53/TP53 at 'Lys-382', leading to repress p53/TP53-target genes. Plays a negative role in TGF-beta response regulation and a positive role in cell migration. This Xenopus tropicalis (Western clawed frog) protein is N-lysine methyltransferase KMT5A.